A 695-amino-acid polypeptide reads, in one-letter code: Lysophospholipase 2 (695 aa).

The signal sequence occupies residues 1-19 (MQLSVLIASVLAAGAAVDA). 20 N-linked (GlcNAc...) asparagine glycosylation sites follow: asparagine 26, asparagine 72, asparagine 83, asparagine 115, asparagine 152, asparagine 171, asparagine 207, asparagine 269, asparagine 335, asparagine 379, asparagine 480, asparagine 504, asparagine 513, asparagine 532, asparagine 556, asparagine 573, asparagine 620, asparagine 626, asparagine 644, and asparagine 648. The 550-residue stretch at 28–577 (SCPDNANFIR…TNYCWNGTID (550 aa)) folds into the PLA2c domain. The interval 612–662 (NTGSGTKSNSSSKTNSTLVTSSRATSTGTLISNSSSNSTVSSTAARSSTSS) is disordered.

This sequence belongs to the lysophospholipase family.

The protein localises to the secreted. It localises to the cell wall. It carries out the reaction a 1-acyl-sn-glycero-3-phosphocholine + H2O = sn-glycerol 3-phosphocholine + a fatty acid + H(+). Catalyzes the release of fatty acids from lysophospholipids. Phospholipase B may well contribute to pathogenicity by abetting the fungus in damaging and traversing host cell membranes, processes which likely increase the rapidity of disseminated infection. The sequence is that of Lysophospholipase 2 from Candida glabrata (strain ATCC 2001 / BCRC 20586 / JCM 3761 / NBRC 0622 / NRRL Y-65 / CBS 138) (Yeast).